Consider the following 72-residue polypeptide: Translation initiation factor IF-1 (72 aa).

The S1-like domain occupies methionine 1–lysine 72.

It belongs to the IF-1 family. Component of the 30S ribosomal translation pre-initiation complex which assembles on the 30S ribosome in the order IF-2 and IF-3, IF-1 and N-formylmethionyl-tRNA(fMet); mRNA recruitment can occur at any time during PIC assembly.

It is found in the cytoplasm. In terms of biological role, one of the essential components for the initiation of protein synthesis. Stabilizes the binding of IF-2 and IF-3 on the 30S subunit to which N-formylmethionyl-tRNA(fMet) subsequently binds. Helps modulate mRNA selection, yielding the 30S pre-initiation complex (PIC). Upon addition of the 50S ribosomal subunit IF-1, IF-2 and IF-3 are released leaving the mature 70S translation initiation complex. The polypeptide is Translation initiation factor IF-1 (Hydrogenovibrio crunogenus (strain DSM 25203 / XCL-2) (Thiomicrospira crunogena)).